The primary structure comprises 179 residues: Large ribosomal subunit protein uL6 (179 aa).

It belongs to the universal ribosomal protein uL6 family. Part of the 50S ribosomal subunit.

This protein binds to the 23S rRNA, and is important in its secondary structure. It is located near the subunit interface in the base of the L7/L12 stalk, and near the tRNA binding site of the peptidyltransferase center. This chain is Large ribosomal subunit protein uL6, found in Mycobacterium sp. (strain KMS).